The chain runs to 463 residues: Carnosine N-methyltransferase (463 aa).

Disordered stretches follow at residues 1–64 and 79–104; these read MTKN…SQLK and KHNHDHSHDHNHDYDDNNEDDEEKEE. The segment covering 9 to 58 has biased composition (low complexity); that stretch reads KSNNSNISNNNNNNNNNNNNNNNNNNNNNNNNNNNNNNNNNNNNNNNNKN. Basic and acidic residues predominate over residues 79-93; the sequence is KHNHDHSHDHNHDYD. The span at 94-103 shows a compositional bias: acidic residues; that stretch reads DNNEDDEEKE. The S-adenosyl-L-methionine site is built by glutamine 215, arginine 218, glycine 260, glutamate 281, aspartate 351, phenylalanine 352, and cysteine 367. Aspartate 371 contacts carnosine. Tyrosine 379 serves as a coordination point for S-adenosyl-L-methionine. Carnosine contacts are provided by histidine 402 and tyrosine 450.

This sequence belongs to the carnosine N-methyltransferase family.

The catalysed reaction is carnosine + S-adenosyl-L-methionine = anserine + S-adenosyl-L-homocysteine + H(+). Functionally, N-methyltransferase that mediates the formation of anserine (beta-alanyl-N(Pi)-methyl-L-histidine) from carnosine. In Dictyostelium discoideum (Social amoeba), this protein is Carnosine N-methyltransferase.